An 837-amino-acid polypeptide reads, in one-letter code: Striatin-interacting protein 1 (837 aa).

Met-1 carries the post-translational modification N-acetylmethionine. The disordered stretch occupies residues Met-1 to Asp-67. Positions Pro-18 to Ala-35 are enriched in pro residues. Residues Lys-47–Glu-60 show a composition bias toward basic and acidic residues. Residues Ser-59, Ser-335, and Ser-339 each carry the phosphoserine modification. The disordered stretch occupies residues Pro-336 to Pro-423. Basic and acidic residues predominate over residues Lys-356–Asp-377. Positions Ser-378–Leu-391 are enriched in acidic residues. At Ser-788 the chain carries Phosphoserine. The interval Asp-796–Gln-837 is required for STRIPAK core complex formation.

It belongs to the STRIP family. Part of the core of STRIPAK complexes composed of PP2A catalytic and scaffolding subunits, the striatins (PP2A regulatory subunits), the striatin-associated proteins MOB4, STRIP1 and STRIP2, PDCD10 and members of the STE20 kinases, such as STK24 and STK26. The STRIPAK complex can be extended by adapter proteins such as SLMAP:SIKE1, CTTNBP2 or CTTNBP2NL. Interacts with CDC42BPB. Interacts with CTTNBP2NL.

It is found in the cytoplasm. Functionally, plays a role in the regulation of cell morphology and cytoskeletal organization. Required in the cortical actin filament dynamics and cell shape. Part of the striatin-interacting phosphatase and kinase (STRIPAK) complexes. STRIPAK complexes have critical roles in protein (de)phosphorylation and are regulators of multiple signaling pathways including Hippo, MAPK, nuclear receptor and cytoskeleton remodeling. Different types of STRIPAK complexes are involved in a variety of biological processes such as cell growth, differentiation, apoptosis, metabolism and immune regulation. The sequence is that of Striatin-interacting protein 1 (STRIP1) from Bos taurus (Bovine).